Here is a 318-residue protein sequence, read N- to C-terminus: NF-kappa-B inhibitor alpha (318 aa).

A disordered region spans residues 1 to 44; it reads MLSAHRPAEPPAVEGCEPPRKERQGGLLPPDDRHDSGLDSMKEE. Positions 17 to 44 are enriched in basic and acidic residues; that stretch reads EPPRKERQGGLLPPDDRHDSGLDSMKEE. Lys-21 participates in a covalent cross-link: Glycyl lysine isopeptide (Lys-Gly) (interchain with G-Cter in ubiquitin). Ser-36 is subject to Phosphoserine; by IKKA and IKKB. Residue Ser-40 is modified to Phosphoserine; by IKKA, IKKB and IKKE. Tyr-46 is modified (phosphotyrosine; by Tyr-kinases). ANK repeat units follow at residues 114–143, 147–176, 186–215, and 220–249; these read LSQT…DLDV, RGNT…PHHL, NGHT…DVNA, and NGRT…DVNK.

It belongs to the NF-kappa-B inhibitor family. In terms of processing, phosphorylated at Ser-36 and Ser-40 by IKKA/CHUK and IKKB/IKBKB; disables inhibition of NF-kappa-B DNA-binding activity. Phosphorylation at positions 36 and 40 is prerequisite to polyubiquitination and subsequent degradation. Post-translationally, monoubiquitinated at Lys-21 following phosphorylation at Ser-36 and Ser-40. The resulting polyubiquitination leads to protein degradation. Hydroxylated by HIF1AN. As to expression, highly expressed in lymph node, thymus followed by liver, brain, muscle, kidney, gastrointestinal and reproductive tract.

Its subcellular location is the cytoplasm. It is found in the nucleus. Functionally, inhibits the activity of dimeric NF-kappa-B/REL complexes by trapping REL (RELA/p65 and NFKB1/p50) dimers in the cytoplasm by masking their nuclear localization signals. On cellular stimulation by immune and pro-inflammatory responses, becomes phosphorylated promoting ubiquitination and degradation, enabling the dimeric RELA to translocate to the nucleus and activate transcription. In Gallus gallus (Chicken), this protein is NF-kappa-B inhibitor alpha (NFKBIA).